Here is a 93-residue protein sequence, read N- to C-terminus: MNAIWIVKGIENVVKSNPKRLEELLANLRRDKELFEEIVISAYVEGLISLSKASELLEITRDEMAEILRKRGVPLRNLNKDDLVAEVEAIKWF.

It belongs to the UPF0175 family.

This chain is UPF0175 protein AF_0100, found in Archaeoglobus fulgidus (strain ATCC 49558 / DSM 4304 / JCM 9628 / NBRC 100126 / VC-16).